Reading from the N-terminus, the 286-residue chain is 33 kDa chaperonin (286 aa).

Intrachain disulfides connect cysteine 233/cysteine 235 and cysteine 267/cysteine 270.

Belongs to the HSP33 family. Post-translationally, under oxidizing conditions two disulfide bonds are formed involving the reactive cysteines. Under reducing conditions zinc is bound to the reactive cysteines and the protein is inactive.

It is found in the cytoplasm. In terms of biological role, redox regulated molecular chaperone. Protects both thermally unfolding and oxidatively damaged proteins from irreversible aggregation. Plays an important role in the bacterial defense system toward oxidative stress. This is 33 kDa chaperonin from Histophilus somni (strain 129Pt) (Haemophilus somnus).